The following is a 222-amino-acid chain: MVKLMKKLEDKKGIIEITFEEEREILELPSKPELPKYASQLINLANIFSQGTRPKVVGQMSELIKEFRKTGGRTFEDWKKWYLQKYPNAIDEATEKIWNMLNNFKETLEQLERDDVRKWVEDLVLIKTYEGLMLQDAILKKVAEELGGNYRPSTIEEESKGIDGVIIIDDKEIPVSIKSKTYVNQEKHLSEELKGHLIIYEKKKNKIIVDYSDLLDLVENTK.

It carries out the reaction Endonucleolytic cleavage of DNA to give specific double-stranded fragments with terminal 5'-phosphates.. Its function is as follows. A P subtype restriction enzyme that recognizes the double-stranded sequence 5'-CTAG-3'; the cleavage site is unknown. This is Type II restriction enzyme MjaI (mjaIR) from Methanocaldococcus jannaschii (strain ATCC 43067 / DSM 2661 / JAL-1 / JCM 10045 / NBRC 100440) (Methanococcus jannaschii).